We begin with the raw amino-acid sequence, 471 residues long: Protein translocase subunit SecF (471 aa).

The segment at 1–29 (MVSRAKVGAETTKGIDEPDRNDNTDDNGA) is disordered. A compositionally biased stretch (basic and acidic residues) spans 13-23 (KGIDEPDRNDN). 6 consecutive transmembrane segments (helical) span residues 88-108 (GGVI…TFGI), 211-231 (ITKK…LYIT), 242-262 (ALTT…LVGF), 267-287 (ATVI…VIVF), 325-345 (LISV…LGVG), and 355-375 (LVGI…LLVT). The interval 393 to 471 (RRTLGSQVGK…TGKRNNVGRR (79 aa)) is disordered. Polar residues predominate over residues 415–431 (KPQNQAESCADASSQEG). A compositionally biased stretch (low complexity) spans 448-460 (PGVRPVRPTGTRR). Basic residues predominate over residues 461–471 (PTGKRNNVGRR).

It belongs to the SecD/SecF family. SecF subfamily. Forms a complex with SecD. Part of the essential Sec protein translocation apparatus which comprises SecA, SecYEG and auxiliary proteins SecDF. Other proteins may also be involved.

Its subcellular location is the cell membrane. Functionally, part of the Sec protein translocase complex. Interacts with the SecYEG preprotein conducting channel. SecDF uses the proton motive force (PMF) to complete protein translocation after the ATP-dependent function of SecA. This Mycobacterium leprae (strain TN) protein is Protein translocase subunit SecF.